The sequence spans 660 residues: Squalene--hopene cyclase (660 aa).

The PFTB 1 repeat unit spans residues 73-114 (EAKIGNYLRRVQGAHGGWPLVHDGEFDMSASVKAYFALKMIG). The Proton donor role is filled by D394. 2 PFTB repeats span residues 419–460 (IDRG…GALL) and 536–586 (IRKA…ALMA).

It belongs to the terpene cyclase/mutase family.

Its subcellular location is the cell membrane. It carries out the reaction squalene = hop-22(29)-ene. It catalyses the reaction squalene + H2O = hopan-22-ol. It functions in the pathway secondary metabolite biosynthesis; hopanoid biosynthesis. In terms of biological role, catalyzes the cyclization of squalene into hopene. This chain is Squalene--hopene cyclase (shc), found in Bradyrhizobium diazoefficiens (strain JCM 10833 / BCRC 13528 / IAM 13628 / NBRC 14792 / USDA 110).